We begin with the raw amino-acid sequence, 510 residues long: ATP synthase subunit alpha (510 aa).

Residue 171 to 178 (GDRQTGKT) coordinates ATP.

The protein belongs to the ATPase alpha/beta chains family. F-type ATPases have 2 components, CF(1) - the catalytic core - and CF(0) - the membrane proton channel. CF(1) has five subunits: alpha(3), beta(3), gamma(1), delta(1), epsilon(1). CF(0) has three main subunits: a(1), b(2) and c(9-12). The alpha and beta chains form an alternating ring which encloses part of the gamma chain. CF(1) is attached to CF(0) by a central stalk formed by the gamma and epsilon chains, while a peripheral stalk is formed by the delta and b chains.

The protein localises to the cell inner membrane. It carries out the reaction ATP + H2O + 4 H(+)(in) = ADP + phosphate + 5 H(+)(out). In terms of biological role, produces ATP from ADP in the presence of a proton gradient across the membrane. The alpha chain is a regulatory subunit. The protein is ATP synthase subunit alpha of Phenylobacterium zucineum (strain HLK1).